A 503-amino-acid polypeptide reads, in one-letter code: Ent-kaurene oxidase-like 5 (503 aa).

The helical transmembrane segment at 8–28 threads the bilayer; that stretch reads GAGGIGVAAAAAVVAATLAVV. Position 448 (Cys448) interacts with heme.

It belongs to the cytochrome P450 family. Heme is required as a cofactor. As to expression, expressed in roots.

It localises to the membrane. Its function is as follows. May hydroxylate diterpenes. The polypeptide is Ent-kaurene oxidase-like 5 (Oryza sativa subsp. japonica (Rice)).